A 758-amino-acid chain; its full sequence is 5-methyltetrahydropteroyltriglutamate--homocysteine methyltransferase (758 aa).

Residues 17–20 and Lys117 each bind 5-methyltetrahydropteroyltri-L-glutamate; that span reads RELK. Residues 434-436 and Glu487 each bind L-homocysteine; that span reads IGS. L-methionine contacts are provided by residues 434–436 and Glu487; that span reads IGS. 5-methyltetrahydropteroyltri-L-glutamate-binding positions include 518 to 519 and Trp564; that span reads RC. Asp602 is a binding site for L-homocysteine. Asp602 contributes to the L-methionine binding site. Glu608 contacts 5-methyltetrahydropteroyltri-L-glutamate. 3 residues coordinate Zn(2+): His644, Cys646, and Glu668. The active-site Proton donor is the His697. Cys729 is a Zn(2+) binding site.

It belongs to the vitamin-B12 independent methionine synthase family. The cofactor is Zn(2+).

The catalysed reaction is 5-methyltetrahydropteroyltri-L-glutamate + L-homocysteine = tetrahydropteroyltri-L-glutamate + L-methionine. It functions in the pathway amino-acid biosynthesis; L-methionine biosynthesis via de novo pathway; L-methionine from L-homocysteine (MetE route): step 1/1. Functionally, catalyzes the transfer of a methyl group from 5-methyltetrahydrofolate to homocysteine resulting in methionine formation. The polypeptide is 5-methyltetrahydropteroyltriglutamate--homocysteine methyltransferase (Sodalis glossinidius (strain morsitans)).